We begin with the raw amino-acid sequence, 182 residues long: Aralkylamine dehydrogenase light chain (182 aa).

Residues 1-47 (MRWLDKFGESLSRSVAHKTSRRSVLRSVGKLMVGSAFVLPVLPVARA) constitute a signal peptide (tat-type signal). 7 disulfide bridges follow: C75–C140, C81–C113, C88–C171, C90–C138, C91–C135, C98–C129, and C130–C161. D84 contacts substrate. W109 (tryptophylquinone 6'-substrate hemiaminal intermediate) is an active-site residue. A Tryptophylquinone modification is found at W109. Positions 109–160 (WIGTCHNPHDGKDYLISYHDCCGKTACGRCQCNTQTRERPGYEFFLHNDVNW) form a cross-link, tryptophan tryptophylquinone (Trp-Trp). Residue D128 is the Proton acceptor of the active site. 156-158 (NDV) lines the substrate pocket.

The protein belongs to the aromatic amine dehydrogenase light chain family. As to quaternary structure, heterotetramer of two light and two heavy chains. Binds two azurin molecules per heterotetramer. It depends on tryptophan tryptophylquinone residue as a cofactor. Post-translationally, tryptophan tryptophylquinone (TTQ) is formed by oxidation of the indole ring of a tryptophan to form tryptophylquinone followed by covalent cross-linking with another tryptophan residue. In terms of processing, predicted to be exported by the Tat system. The position of the signal peptide cleavage has been experimentally proven.

Its subcellular location is the periplasm. The catalysed reaction is an aralkylamine + 2 oxidized [azurin] + H2O = an aromatic aldehyde + 2 reduced [azurin] + NH4(+) + 2 H(+). Its activity is regulated as follows. Irreversibly inhibited by phenylhydrazine, hydroxylamine, semicarbazide, hydrazine and aminoguanidine. Reversibly inhibited by isonicotinic acid hydrazide (isoniazid) and isonicotinic acid 2-isopropyl hydrazide (iproniazid). Its function is as follows. Oxidizes primary aromatic amines and, more slowly, some long-chain aliphatic amines, but not methylamine or ethylamine. Uses azurin as an electron acceptor to transfer electrons from the reduced tryptophylquinone cofactor. In Alcaligenes faecalis, this protein is Aralkylamine dehydrogenase light chain.